The sequence spans 715 residues: Polyribonucleotide nucleotidyltransferase (715 aa).

2 residues coordinate Mg(2+): aspartate 493 and aspartate 499. One can recognise a KH domain in the interval 560 to 619; it reads PRMITVKINPEKIRDVIGKGGSVIRALTEETGTTIDISDDGVVTIASTSSEGMAEAKKRI. Positions 629 to 697 constitute an S1 motif domain; sequence GQVYEGTVLK…EKGRVRLSAK (69 aa).

The protein belongs to the polyribonucleotide nucleotidyltransferase family. Requires Mg(2+) as cofactor.

The protein localises to the cytoplasm. It carries out the reaction RNA(n+1) + phosphate = RNA(n) + a ribonucleoside 5'-diphosphate. Functionally, involved in mRNA degradation. Catalyzes the phosphorolysis of single-stranded polyribonucleotides processively in the 3'- to 5'-direction. The polypeptide is Polyribonucleotide nucleotidyltransferase (Burkholderia cenocepacia (strain HI2424)).